The sequence spans 143 residues: MGKPRGIRTARKHVNHRREQRWADKDYKKAHMGTRWKANPFGGASHAKGIVLEKVGVEAKQPNSAIRKCVRVQLIKNGKKVTAFVPRDGCLNHIEENDEVLVAGFGRKGHAVGDIPGVRFKVVKVANVSLLALYKEKKERPRS.

The segment covering 1–19 has biased composition (basic residues); the sequence is MGKPRGIRTARKHVNHRRE. The disordered stretch occupies residues 1-21; it reads MGKPRGIRTARKHVNHRREQR. The residue at position 62 (Pro62) is a Hydroxyproline.

This sequence belongs to the universal ribosomal protein uS12 family. In terms of assembly, component of the 40S small ribosomal subunit.

The protein localises to the cytoplasm. Its subcellular location is the cytosol. It localises to the rough endoplasmic reticulum. The chain is Small ribosomal subunit protein uS12 (RpS23) from Papilio dardanus (African swallowtail butterfly).